We begin with the raw amino-acid sequence, 127 residues long: Small ribosomal subunit protein eS8 (127 aa).

Residues 1-31 are disordered; the sequence is MTIFQGKSGKKATGGSLKQSRKKRRFELGRE.

The protein belongs to the eukaryotic ribosomal protein eS8 family. In terms of assembly, part of the 30S ribosomal subunit.

This chain is Small ribosomal subunit protein eS8 (rps8e), found in Thermoplasma acidophilum (strain ATCC 25905 / DSM 1728 / JCM 9062 / NBRC 15155 / AMRC-C165).